A 446-amino-acid polypeptide reads, in one-letter code: Tubulin beta-3 chain (446 aa).

GTP-binding residues include Gln-11, Glu-69, Ser-138, Gly-142, Thr-143, Gly-144, Asn-204, and Asn-226. Glu-69 provides a ligand contact to Mg(2+). Positions 421–446 (EYQQYQDATAEEEDYEEEEEDEEVAA) are disordered. A compositionally biased stretch (acidic residues) spans 429–446 (TAEEEDYEEEEEDEEVAA).

The protein belongs to the tubulin family. Dimer of alpha and beta chains. A typical microtubule is a hollow water-filled tube with an outer diameter of 25 nm and an inner diameter of 15 nM. Alpha-beta heterodimers associate head-to-tail to form protofilaments running lengthwise along the microtubule wall with the beta-tubulin subunit facing the microtubule plus end conferring a structural polarity. Microtubules usually have 13 protofilaments but different protofilament numbers can be found in some organisms and specialized cells. Mg(2+) is required as a cofactor. In terms of tissue distribution, expressed in roots, second node, leaf sheaths, and suspension cultured cells.

Its subcellular location is the cytoplasm. The protein localises to the cytoskeleton. Tubulin is the major constituent of microtubules, a cylinder consisting of laterally associated linear protofilaments composed of alpha- and beta-tubulin heterodimers. Microtubules grow by the addition of GTP-tubulin dimers to the microtubule end, where a stabilizing cap forms. Below the cap, tubulin dimers are in GDP-bound state, owing to GTPase activity of alpha-tubulin. This is Tubulin beta-3 chain (TUBB3) from Oryza sativa subsp. japonica (Rice).